The primary structure comprises 242 residues: MKVAAKKLATSRMRKDRAAAASPSSDIENSENPSSLASHSSSSGRMTPSKNTRSRKGVSVKDVSNHKITEFFQVRRSNRKTSKQISDEAKHALRDTVLKGTNERLLEVYKDVVKGRGIRTKVNFEKGDFVVEYRGVMMEYSEAKVIEEQYSNDEEIGSYMYFFEHNNKKWCIDATKESPWKGRLINHSVLRPNLKTKVVEIDGSHHLILVARRQIAQGEELLYDYGDRSAETIAKNPWLVNT.

The tract at residues 1–61 (MKVAAKKLAT…TRSRKGVSVK (61 aa)) is disordered. Positions 30 to 43 (SENPSSLASHSSSS) are enriched in low complexity. One can recognise an SET domain in the interval 104–226 (RLLEVYKDVV…QGEELLYDYG (123 aa)). Residues 114–116 (KGR), Y159, and 186–187 (NH) contribute to the S-adenosyl-L-methionine site.

Belongs to the class V-like SAM-binding methyltransferase superfamily. Histone-lysine methyltransferase family. PR/SET subfamily. As to expression, in embryos, it is expressed ubiquitously. In late embryos, it is expressed in hypodermal seam cells. In L3 and L4 larvae and thereafter, it is expressed in vulval precursor cells. In adult males, it is also expressed in 6 unidentified posterior cells.

It is found in the nucleus. It localises to the chromosome. The enzyme catalyses L-lysyl(20)-[histone H4] + S-adenosyl-L-methionine = N(6)-methyl-L-lysyl(20)-[histone H4] + S-adenosyl-L-homocysteine + H(+). Histone methyltransferase that specifically monomethylates 'Lys-20' of histone H4 (H4K20me1). H4K20me1 is enriched on hermaphrodite X chromosomes and during mitosis. Involved in dosage compensation by repression of X-linked gene expression in hermaphrodites. Plays a role in growth and body fat regulation downstream of the TOR complex 2 pathway. The chain is Histone-lysine N-methyltransferase set-1 (set-1) from Caenorhabditis elegans.